We begin with the raw amino-acid sequence, 269 residues long: Tryptophan synthase alpha chain (269 aa).

Catalysis depends on proton acceptor residues Glu-49 and Asp-60.

It belongs to the TrpA family. In terms of assembly, tetramer of two alpha and two beta chains.

It catalyses the reaction (1S,2R)-1-C-(indol-3-yl)glycerol 3-phosphate + L-serine = D-glyceraldehyde 3-phosphate + L-tryptophan + H2O. It participates in amino-acid biosynthesis; L-tryptophan biosynthesis; L-tryptophan from chorismate: step 5/5. In terms of biological role, the alpha subunit is responsible for the aldol cleavage of indoleglycerol phosphate to indole and glyceraldehyde 3-phosphate. This Delftia acidovorans (strain DSM 14801 / SPH-1) protein is Tryptophan synthase alpha chain.